The following is a 144-amino-acid chain: Putative HTH-type transcriptional regulator aq_268 (144 aa).

The region spanning 2-133 is the HTH rrf2-type domain; it reads IFSDTVRYAL…KGTTIKDLIN (132 aa).

This Aquifex aeolicus (strain VF5) protein is Putative HTH-type transcriptional regulator aq_268.